The primary structure comprises 407 residues: RNA-binding motif, single-stranded-interacting protein 2 (407 aa).

Met1 is modified (N-acetylmethionine). A disordered region spans residues 14–51 (FGYNKNNKKPYVSLSQQMAPPSPSSSTPNSSSGSTAHD). Low complexity predominate over residues 37 to 47 (SSSTPNSSSGS). 2 consecutive RRM domains span residues 56-129 (TNLY…MAKQ) and 135-220 (TNLY…FADG). Position 106 is a phosphoserine (Ser106). Phosphoserine is present on residues Ser280 and Ser285. Over residues 374-392 (PSSSVSVEESGSQQSQVPV) the composition is skewed to low complexity. A disordered region spans residues 374–398 (PSSSVSVEESGSQQSQVPVDAPSEH).

The protein resides in the nucleus. The chain is RNA-binding motif, single-stranded-interacting protein 2 (RBMS2) from Bos taurus (Bovine).